The sequence spans 342 residues: MKIAIDAMGGDYAPREIVKGALLAAEQYRLNIILVGDEEQLRAELGRSNAGGLVNIVHAPEVIEMREHPAVAVRRKKNSSIVKATQLVRDGEASALVSAGSTGAAMAAALFGLGRIKGIDRPAIAGVLPNEKGLTVLLDAGANVDCKPYHLLQFGVMGYLYAKKIFGITCPRVGLLSNGEEETKGNEVTLAAYHLLQKAGINFVGNIEGRDLFNGNVDVAVCDGFVGNVVLKAGEGLAGALFKIMKEEISKSWLAKIGTVMAEPALKGFKSRLDYAEYGGAPLLGVNGISIICHGSSTAKAVKNAIRVARESVENRLLEDIRSSIESIEVKGAGGNLVQEID.

This sequence belongs to the PlsX family. Homodimer. Probably interacts with PlsY.

The protein localises to the cytoplasm. It carries out the reaction a fatty acyl-[ACP] + phosphate = an acyl phosphate + holo-[ACP]. It functions in the pathway lipid metabolism; phospholipid metabolism. Functionally, catalyzes the reversible formation of acyl-phosphate (acyl-PO(4)) from acyl-[acyl-carrier-protein] (acyl-ACP). This enzyme utilizes acyl-ACP as fatty acyl donor, but not acyl-CoA. This is Phosphate acyltransferase from Pelotomaculum thermopropionicum (strain DSM 13744 / JCM 10971 / SI).